Reading from the N-terminus, the 392-residue chain is SH3 domain-binding protein 5-like (392 aa).

The segment at 1-57 (MADLKKAAGGRETPQGELRSEVVEDEGPRSPVAEEPGGSGSNSSETKLSPREEEELD) is disordered. Thr-13 is modified (phosphothreonine). Basic and acidic residues predominate over residues 18–28 (LRSEVVEDEGP). Ser-30 and Ser-49 each carry phosphoserine. 2 coiled-coil regions span residues 59-140 (RIQE…YERA) and 169-272 (WQEM…EQIH). Residues 275–332 (RRGLPPHPLGPRRSSPVGAEAGPEGIEDGDSGIEGAEGGGLEEGSSLGPGPGPDTDTL) form a disordered region. The segment covering 317–332 (EGSSLGPGPGPDTDTL) has biased composition (low complexity). A phosphoserine mark is found at Ser-342, Ser-349, Ser-357, Ser-361, and Ser-377. Residues 364 to 392 (GQELGAQSRGRRGSDIGVRGGRHQRSVSL) form a disordered region. Over residues 383-392 (GGRHQRSVSL) the composition is skewed to basic residues.

The protein belongs to the SH3BP5 family.

Functions as a guanine nucleotide exchange factor (GEF) for RAB11A. The sequence is that of SH3 domain-binding protein 5-like (Sh3bp5l) from Mus musculus (Mouse).